Reading from the N-terminus, the 824-residue chain is A-adding tRNA nucleotidyltransferase (824 aa).

CBS domains follow at residues 305 to 363 (MNTP…DEPI) and 367 to 423 (VNRD…LEKL). 459–462 (GVVR) contacts ATP. Residues Asp472 and Asp474 each contribute to the Mg(2+) site. Residues 545-546 (RD), Asn550, 590-599 (DPVRILRALR), Arg603, and Arg632 each bind ATP.

Belongs to the tRNA nucleotidyltransferase/poly(A) polymerase family. Mg(2+) serves as cofactor.

The catalysed reaction is a tRNA with a 3' CC end + ATP = a tRNA with a 3' CCA end + diphosphate. Its function is as follows. tRNA nucleotidyltransferase involved in the synthesis of the tRNA CCA terminus. Adds the terminal adenosine residue to tRNA. Can incorporate CMP into tRNA ending with C74C75 (tRNACC), with very weak efficiency. This Aquifex aeolicus (strain VF5) protein is A-adding tRNA nucleotidyltransferase.